A 60-amino-acid chain; its full sequence is Large ribosomal subunit protein uL30 (60 aa).

It belongs to the universal ribosomal protein uL30 family. In terms of assembly, part of the 50S ribosomal subunit.

This Aromatoleum aromaticum (strain DSM 19018 / LMG 30748 / EbN1) (Azoarcus sp. (strain EbN1)) protein is Large ribosomal subunit protein uL30.